A 614-amino-acid chain; its full sequence is Male-specific lethal 1 homolog (614 aa).

2 disordered regions span residues 1 to 127 (MTMR…GCSP) and 147 to 217 (KEPT…GASS). A phosphoserine mark is found at Ser66 and Ser126. Low complexity predominate over residues 158–169 (GAASPAATASDP). The span at 170-184 (AGPPPLPLPGPPPLA) shows a compositional bias: pro residues. Over residues 185-194 (PTATAGTLAA) the composition is skewed to low complexity. At Ser205 the chain carries Phosphoserine. A coiled-coil region spans residues 213-282 (SGASSQAACL…KDNEKERHKL (70 aa)). Residues 223–237 (KQILLLQLDLIEQQQ) are interaction with MSL2. Composition is skewed to basic and acidic residues over residues 272–281 (KKDNEKERHK) and 294–304 (TELSEKIKLEC). Residues 272–420 (KKDNEKERHK…PKEKAFSSEI (149 aa)) form a disordered region. A Glycyl lysine isopeptide (Lys-Gly) (interchain with G-Cter in SUMO2) cross-link involves residue Lys301. A Nuclear localization signal motif is present at residues 317–346 (PKPFSCGRSGKGHKRKSPFGSTERKTPVKK). Lys353 is subject to N6-acetyllysine. Glycyl lysine isopeptide (Lys-Gly) (interchain with G-Cter in SUMO2) cross-links involve residues Lys365 and Lys378. Residues 376–392 (VCKRELRSQETPEKPRS) show a composition bias toward basic and acidic residues. Ser393 carries the post-translational modification Phosphoserine. Residues 393 to 407 (SVDTPPRLSTPQKGP) are compositionally biased toward polar residues. At Thr396 the chain carries Phosphothreonine. Ser442 bears the Phosphoserine mark. The PEHE domain maps to 472–591 (VLAVPSWRDH…LTPQNFELPW (120 aa)). The interval 496–514 (ENLDDSVFSKRHAKLELDE) is interaction with KAT8 HAT domain. The Bipartite nuclear localization signal signature appears at 505 to 519 (KRHAKLELDEKRRKR). The segment at 550-591 (EVTSFFPEPDDVESLMITPFLPVVAFGRPLPKLTPQNFELPW) is sufficient for interaction with MSL3 MRG domain.

It belongs to the msl-1 family. As to quaternary structure, component of a multisubunit histone acetyltransferase complex (MSL) at least composed of the KAT8/MOF/MYST1, MSL1/hampin, MSL2 and MSL3. Forms a MSL heterotetrameric core with MSL2. Interacts (via PEHE domain) with KAT8 (via HAT domain) and MSL3 (via MRG domain); both interactions are direct. Directly interacts with NUPR1. Interacts with TP53BP1; this interaction may be required for MSL1 DNA repair activity, but not for histone acetyltransferase activity. Interacts with TTC4, ECM2 and PIHD1. In terms of processing, sumoylated with SUMO1.

Its subcellular location is the nucleus. It is found in the nucleoplasm. The protein localises to the nucleus speckle. Non-catalytic component of the MSL histone acetyltransferase complex, a multiprotein complex that mediates the majority of histone H4 acetylation at 'Lys-16' (H4K16ac), an epigenetic mark that prevents chromatin compaction. The MSL complex is required for chromosome stability and genome integrity by maintaining homeostatic levels of H4K16ac. The MSL complex is also involved in gene dosage by promoting up-regulation of genes expressed by the X chromosome. X up-regulation is required to compensate for autosomal biallelic expression. The MSL complex also participates in gene dosage compensation by promoting expression of Tsix non-coding RNA. Within the MSL complex, acts as a scaffold to tether MSL3 and KAT8 together for enzymatic activity regulation. Greatly enhances MSL2 E3 ubiquitin ligase activity, promoting monoubiquitination of histone H2B at 'Lys-34' (H2BK34Ub). This modification in turn stimulates histone H3 methylation at 'Lys-4' (H3K4me) and 'Lys-79' (H3K79me) and leads to gene activation, including that of HOXA9 and MEIS1. This Homo sapiens (Human) protein is Male-specific lethal 1 homolog.